The following is a 248-amino-acid chain: tRNA (guanine-N(1)-)-methyltransferase (248 aa).

S-adenosyl-L-methionine-binding positions include Gly-116 and Val-136 to Leu-141.

This sequence belongs to the RNA methyltransferase TrmD family. Homodimer.

It is found in the cytoplasm. It catalyses the reaction guanosine(37) in tRNA + S-adenosyl-L-methionine = N(1)-methylguanosine(37) in tRNA + S-adenosyl-L-homocysteine + H(+). Specifically methylates guanosine-37 in various tRNAs. The chain is tRNA (guanine-N(1)-)-methyltransferase from Psychromonas ingrahamii (strain DSM 17664 / CCUG 51855 / 37).